The primary structure comprises 171 residues: Putative auxin-responsive protein IAA29 (171 aa).

One can recognise a PB1 domain in the interval 19–114 (SRFVKVFMHG…TVKKIYIVPA (96 aa)). A disordered region spans residues 117 to 171 (QNENDYQEEEEDNAAAAATADEDGDGAAADDGVAAAADDVDDVAGYTSNDDPSFD). Residues 142–153 (GAAADDGVAAAA) are compositionally biased toward low complexity. The segment covering 162 to 171 (YTSNDDPSFD) has biased composition (polar residues).

Belongs to the Aux/IAA family. In terms of assembly, homodimers and heterodimers.

Its subcellular location is the nucleus. Its function is as follows. Aux/IAA proteins are short-lived transcriptional factors that function as repressors of early auxin response genes at low auxin concentrations. The polypeptide is Putative auxin-responsive protein IAA29 (IAA29) (Oryza sativa subsp. japonica (Rice)).